A 309-amino-acid polypeptide reads, in one-letter code: MRIYVLGAGSIGSLFGALLARAGNDVTLIGRREQVDAINKNGLHVFGAEEFTVKPKATIYAPEEPPDLLILAVKSYSTKTALECARQCIGRNTWVLSIQNGLGNEELALKYTPNVMGGVTTNGAMLVEWGKVLWAGKGITVIGRYPTGRDDFVDEVASVFNEAGIDTSVTENAIGWKWAKAIVNSVINGLGTVLEVKNGHLKDDPHLEGISVDIAREGCMVAQQLGIEFEIHPLELLWDTIERTRENYNSTLQDIWRGRETEVDYIHGKIVEYARSVGMEAPRNELLWVLVKAKERINRGKTRNISEGC.

NADP(+) contacts are provided by residues Gly7–Gly12, Arg31, and Lys74. CoA-binding positions include Ala8–Ser10, Arg31, Lys74, and Cys84. NADP(+)-binding residues include Asn100 and Ala124. Lys180 (proton donor) is an active-site residue. Residues Lys180, Asn184, Asn188, Asn198, and Asn247–Ser250 each bind substrate. Position 257 (Arg257) interacts with CoA. Position 262 (Glu262) interacts with NADP(+).

It belongs to the ketopantoate reductase family. As to quaternary structure, homodimer.

The protein resides in the cytoplasm. The catalysed reaction is (R)-pantoate + NAD(+) = 2-dehydropantoate + NADH + H(+). It catalyses the reaction (R)-pantoate + NADP(+) = 2-dehydropantoate + NADPH + H(+). It functions in the pathway cofactor biosynthesis; coenzyme A biosynthesis. With respect to regulation, regulated by feedback inhibition by coenzyme A (CoA). CoA acts by competing with NAD(P)H. A disulfide bond is formed between CoA and Cys-84, which indicates an irreversible inhibition upon binding of CoA. Catalyzes the NAD(P)H-dependent reduction of ketopantoate into pantoic acid. Prefers NADH rather than NADPH as the electron donor. The chain is 2-dehydropantoate 2-reductase from Thermococcus kodakarensis (strain ATCC BAA-918 / JCM 12380 / KOD1) (Pyrococcus kodakaraensis (strain KOD1)).